A 204-amino-acid polypeptide reads, in one-letter code: Large ribosomal subunit protein uL4 (204 aa).

Residues 49–72 (QKNRAAVSGGGKKPWRQKGTGRAR) are disordered.

Belongs to the universal ribosomal protein uL4 family. As to quaternary structure, part of the 50S ribosomal subunit.

Functionally, one of the primary rRNA binding proteins, this protein initially binds near the 5'-end of the 23S rRNA. It is important during the early stages of 50S assembly. It makes multiple contacts with different domains of the 23S rRNA in the assembled 50S subunit and ribosome. Forms part of the polypeptide exit tunnel. The chain is Large ribosomal subunit protein uL4 from Saccharophagus degradans (strain 2-40 / ATCC 43961 / DSM 17024).